An 80-amino-acid chain; its full sequence is Protein FAM229B (80 aa).

The segment at 1-44 (MPFRFGTQPRRFPVEGGDSSIGLEPGLSSSATCNGKEMSPTRQL) is disordered.

This sequence belongs to the FAM229 family.

The chain is Protein FAM229B (FAM229B) from Bos taurus (Bovine).